A 44-amino-acid polypeptide reads, in one-letter code: MRDIKTYLSTAPVLATLWFGSLAGLLIEINRLFPDALTFPFFSF.

A helical membrane pass occupies residues 7 to 27 (YLSTAPVLATLWFGSLAGLLI).

The protein belongs to the PsaJ family.

Its subcellular location is the plastid. It is found in the chloroplast thylakoid membrane. Functionally, may help in the organization of the PsaE and PsaF subunits. In Calycanthus floridus var. glaucus (Eastern sweetshrub), this protein is Photosystem I reaction center subunit IX.